We begin with the raw amino-acid sequence, 431 residues long: uncharacterized protein (431 aa).

4Fe-4S ferredoxin-type domains follow at residues 336–367 (VRPV…NGLD) and 362–391 (IDNG…MDTG).

This is an uncharacterized protein from Methanothermobacter thermautotrophicus (strain ATCC 29096 / DSM 1053 / JCM 10044 / NBRC 100330 / Delta H) (Methanobacterium thermoautotrophicum).